Consider the following 505-residue polypeptide: Aspartyl/glutamyl-tRNA(Asn/Gln) amidotransferase subunit B (505 aa).

It belongs to the GatB/GatE family. GatB subfamily. In terms of assembly, heterotrimer of A, B and C subunits.

The catalysed reaction is L-glutamyl-tRNA(Gln) + L-glutamine + ATP + H2O = L-glutaminyl-tRNA(Gln) + L-glutamate + ADP + phosphate + H(+). It catalyses the reaction L-aspartyl-tRNA(Asn) + L-glutamine + ATP + H2O = L-asparaginyl-tRNA(Asn) + L-glutamate + ADP + phosphate + 2 H(+). In terms of biological role, allows the formation of correctly charged Asn-tRNA(Asn) or Gln-tRNA(Gln) through the transamidation of misacylated Asp-tRNA(Asn) or Glu-tRNA(Gln) in organisms which lack either or both of asparaginyl-tRNA or glutaminyl-tRNA synthetases. The reaction takes place in the presence of glutamine and ATP through an activated phospho-Asp-tRNA(Asn) or phospho-Glu-tRNA(Gln). The protein is Aspartyl/glutamyl-tRNA(Asn/Gln) amidotransferase subunit B of Haloarcula marismortui (strain ATCC 43049 / DSM 3752 / JCM 8966 / VKM B-1809) (Halobacterium marismortui).